Here is a 595-residue protein sequence, read N- to C-terminus: MDTLHHRFQQFQKTIWFNIFCYLWTGIFSFLAFAPVSLTHFVWIAPFGFFWLSLKYHGKYKKLFFHGLLIGVVFYAISFHWIIHMAITFGNFPYVVAILILLFAGLLFGLKFPIFMMSFSFLSGKIGRHSVWVAGFCGLLSELIGPQLFPWYWGNLAAGNIILAQNAEITGVYGISFLVFIVSYTLFQSNPWHWKEIIHSKEKRKQYLRFITLPALLLLTFIVSGIFLFKKWENVKPVKSLNVLIVQPDAPLSFRDGREIKESIEALMARIEKLTDEGAVRLGKKPDLIVLPEAGVPFFSAHKTEITTKVRRMYWDRFDSLMFLLANRYKANVFFNEIDAGFKGAPSPRNLRYYNNNVLYDPNGDRRDSYQKKFLLMFGEYMPFDFLYELSQQTGRFEPGLTHNLIRYYTPRYYTLAEKEKSPKGRHLGWTDTETFNHEAVRSYYETTRTEVSETGKFLPLICYEVILPEFVREFRTAGNPEFIVNLTNDKWYGATTESDQHMELGRLRSIELRRWMVRSTNSGISANIDHLGRFVGNKKTGLMTAEALSETIDVIDSPPTFYTQYGNLIPWLMLFLTGIYYLNLLIGIRRGKSA.

5 helical membrane-spanning segments follow: residues 30–50 (FLAFAPVSLTHFVWIAPFGFF), 63–83 (LFFHGLLIGVVFYAISFHWII), 95–115 (VVAILILLFAGLLFGLKFPIF), 167–187 (AEITGVYGISFLVFIVSYTLF), and 210–230 (FITLPALLLLTFIVSGIFLFK). The CN hydrolase domain maps to 241–555 (LNVLIVQPDA…AEALSETIDV (315 aa)). Residue Glu293 is the Proton acceptor of the active site. The active site involves Lys372. The active-site Nucleophile is Cys463. Residues 569-589 (LIPWLMLFLTGIYYLNLLIGI) form a helical membrane-spanning segment.

Belongs to the CN hydrolase family. Apolipoprotein N-acyltransferase subfamily.

It localises to the cell inner membrane. The enzyme catalyses N-terminal S-1,2-diacyl-sn-glyceryl-L-cysteinyl-[lipoprotein] + a glycerophospholipid = N-acyl-S-1,2-diacyl-sn-glyceryl-L-cysteinyl-[lipoprotein] + a 2-acyl-sn-glycero-3-phospholipid + H(+). The protein operates within protein modification; lipoprotein biosynthesis (N-acyl transfer). Functionally, catalyzes the phospholipid dependent N-acylation of the N-terminal cysteine of apolipoprotein, the last step in lipoprotein maturation. In Leptospira interrogans serogroup Icterohaemorrhagiae serovar Lai (strain 56601), this protein is Apolipoprotein N-acyltransferase 2.